A 620-amino-acid polypeptide reads, in one-letter code: Chaperone protein HscA homolog (620 aa).

It belongs to the heat shock protein 70 family.

Functionally, chaperone involved in the maturation of iron-sulfur cluster-containing proteins. Has a low intrinsic ATPase activity which is markedly stimulated by HscB. The chain is Chaperone protein HscA homolog from Shewanella loihica (strain ATCC BAA-1088 / PV-4).